The following is a 115-amino-acid chain: T cell receptor beta variable 7-8 (115 aa).

A signal peptide spans Met-1–Ala-21. Positions Gly-22–Leu-115 constitute an Ig-like domain. Cys-42 and Cys-111 are joined by a disulfide.

Alpha-beta TR is a heterodimer composed of an alpha and beta chain; disulfide-linked. The alpha-beta TR is associated with the transmembrane signaling CD3 coreceptor proteins to form the TR-CD3 (TcR or TCR). The assembly of alpha-beta TR heterodimers with CD3 occurs in the endoplasmic reticulum where a single alpha-beta TR heterodimer associates with one CD3D-CD3E heterodimer, one CD3G-CD3E heterodimer and one CD247 homodimer forming a stable octameric structure. CD3D-CD3E and CD3G-CD3E heterodimers preferentially associate with TR alpha and TR beta chains, respectively. The association of the CD247 homodimer is the last step of TcR assembly in the endoplasmic reticulum and is required for transport to the cell surface.

It is found in the cell membrane. Its function is as follows. V region of the variable domain of T cell receptor (TR) beta chain that participates in the antigen recognition. Alpha-beta T cell receptors are antigen specific receptors which are essential to the immune response and are present on the cell surface of T lymphocytes. Recognize peptide-major histocompatibility (MH) (pMH) complexes that are displayed by antigen presenting cells (APC), a prerequisite for efficient T cell adaptive immunity against pathogens. Binding of alpha-beta TR to pMH complex initiates TR-CD3 clustering on the cell surface and intracellular activation of LCK that phosphorylates the ITAM motifs of CD3G, CD3D, CD3E and CD247 enabling the recruitment of ZAP70. In turn ZAP70 phosphorylates LAT, which recruits numerous signaling molecules to form the LAT signalosome. The LAT signalosome propagates signal branching to three major signaling pathways, the calcium, the mitogen-activated protein kinase (MAPK) kinase and the nuclear factor NF-kappa-B (NF-kB) pathways, leading to the mobilization of transcription factors that are critical for gene expression and essential for T cell growth and differentiation. The T cell repertoire is generated in the thymus, by V-(D)-J rearrangement. This repertoire is then shaped by intrathymic selection events to generate a peripheral T cell pool of self-MH restricted, non-autoaggressive T cells. Post-thymic interaction of alpha-beta TR with the pMH complexes shapes TR structural and functional avidity. This Homo sapiens (Human) protein is T cell receptor beta variable 7-8.